Consider the following 232-residue polypeptide: MIIIEKIKRGLIVSCQALENEPLHSSFIMSKMALAAKMGGAIGIRANGVNDISQIKLEVDLPIIGIIKRNYNNCDVFITPTMKEIDELCNEGVDIIALDATFRNRPDGVLLDDFFESIKKKYPKQCLMADISSLDEAINADKLGFDFIGTTLYGYTKSTNGLDIADNDFNFLKALINSNFKSTLIVEGKIDTPLKAQKCFEMGVDLVVVGGAITRPVEITKKFVEKINQVKR.

Belongs to the NanE family.

It catalyses the reaction an N-acyl-D-glucosamine 6-phosphate = an N-acyl-D-mannosamine 6-phosphate. It participates in amino-sugar metabolism; N-acetylneuraminate degradation; D-fructose 6-phosphate from N-acetylneuraminate: step 3/5. Converts N-acetylmannosamine-6-phosphate (ManNAc-6-P) to N-acetylglucosamine-6-phosphate (GlcNAc-6-P). The chain is Putative N-acetylmannosamine-6-phosphate 2-epimerase from Borrelia garinii subsp. bavariensis (strain ATCC BAA-2496 / DSM 23469 / PBi) (Borreliella bavariensis).